Here is a 321-residue protein sequence, read N- to C-terminus: Thioredoxin reductase (321 aa).

FAD is bound by residues 11–14, 40–41, Gln-45, Asn-54, Cys-145, Asp-288, and 295–297; these read SGPA, TA, and RQA. The cysteines at positions 142 and 145 are disulfide-linked.

It belongs to the class-II pyridine nucleotide-disulfide oxidoreductase family. In terms of assembly, homodimer. FAD serves as cofactor.

It localises to the cytoplasm. It carries out the reaction [thioredoxin]-dithiol + NADP(+) = [thioredoxin]-disulfide + NADPH + H(+). In Debaryomyces hansenii (strain ATCC 36239 / CBS 767 / BCRC 21394 / JCM 1990 / NBRC 0083 / IGC 2968) (Yeast), this protein is Thioredoxin reductase (TRR1).